We begin with the raw amino-acid sequence, 317 residues long: Spermidine synthase 2 (317 aa).

Residues 27–264 (PGWFSEISPL…GMIGFMLCST (238 aa)) form the PABS domain. Gln58 contacts S-adenosyl 3-(methylsulfanyl)propylamine. Tyr88 contacts putrescine. S-adenosyl 3-(methylsulfanyl)propylamine-binding positions include Gln89, Asp113, Glu133, 164–165 (DG), and Asp183. The Proton acceptor role is filled by Asp183. Residues 183-186 (DSSD) and Tyr252 each bind putrescine.

Belongs to the spermidine/spermine synthase family.

The enzyme catalyses S-adenosyl 3-(methylsulfanyl)propylamine + putrescine = S-methyl-5'-thioadenosine + spermidine + H(+). The protein operates within amine and polyamine biosynthesis; spermidine biosynthesis; spermidine from putrescine: step 1/1. The protein is Spermidine synthase 2 of Datura stramonium (Jimsonweed).